The following is a 182-amino-acid chain: Large ribosomal subunit protein uL5c (182 aa).

It belongs to the universal ribosomal protein uL5 family. As to quaternary structure, part of the 50S ribosomal subunit; contacts the 5S rRNA.

The protein localises to the plastid. It localises to the chloroplast. In terms of biological role, binds 5S rRNA, forms part of the central protuberance of the 50S subunit. This chain is Large ribosomal subunit protein uL5c (rpl5), found in Cyanidium caldarium (Red alga).